A 28-amino-acid polypeptide reads, in one-letter code: Dermaseptin-SP1 (28 aa).

In terms of tissue distribution, expressed by the skin glands.

Its subcellular location is the secreted. Probable antimicrobial peptide which stimulates insulin-release in glucose-responsive BRIN-BD 11 cells. In Agalychnis spurrelli (Gliding leaf frog), this protein is Dermaseptin-SP1.